Reading from the N-terminus, the 101-residue chain is Urease subunit beta (101 aa).

Belongs to the urease beta subunit family. As to quaternary structure, heterotrimer of UreA (gamma), UreB (beta) and UreC (alpha) subunits. Three heterotrimers associate to form the active enzyme.

Its subcellular location is the cytoplasm. It carries out the reaction urea + 2 H2O + H(+) = hydrogencarbonate + 2 NH4(+). It participates in nitrogen metabolism; urea degradation; CO(2) and NH(3) from urea (urease route): step 1/1. This is Urease subunit beta from Cupriavidus necator (strain ATCC 17699 / DSM 428 / KCTC 22496 / NCIMB 10442 / H16 / Stanier 337) (Ralstonia eutropha).